The chain runs to 162 residues: Transcriptional repressor NrdR (162 aa).

Residues 3-34 (CPFCQFEGLKVTDSRDAMEMNAIRRRRECLNC) fold into a zinc finger. Residues 48–138 (VQVQKRDGTY…VYKRFKDLGE (91 aa)) form the ATP-cone domain.

This sequence belongs to the NrdR family. It depends on Zn(2+) as a cofactor.

Negatively regulates transcription of bacterial ribonucleotide reductase nrd genes and operons by binding to NrdR-boxes. The protein is Transcriptional repressor NrdR of Protochlamydia amoebophila (strain UWE25).